The chain runs to 247 residues: Ubiquinone biosynthesis O-methyltransferase (247 aa).

The S-adenosyl-L-methionine site is built by R39, G70, D91, and M134.

Belongs to the methyltransferase superfamily. UbiG/COQ3 family.

The enzyme catalyses a 3-demethylubiquinol + S-adenosyl-L-methionine = a ubiquinol + S-adenosyl-L-homocysteine + H(+). It catalyses the reaction a 3-(all-trans-polyprenyl)benzene-1,2-diol + S-adenosyl-L-methionine = a 2-methoxy-6-(all-trans-polyprenyl)phenol + S-adenosyl-L-homocysteine + H(+). Its pathway is cofactor biosynthesis; ubiquinone biosynthesis. In terms of biological role, O-methyltransferase that catalyzes the 2 O-methylation steps in the ubiquinone biosynthetic pathway. The protein is Ubiquinone biosynthesis O-methyltransferase of Cereibacter sphaeroides (strain ATCC 17025 / ATH 2.4.3) (Rhodobacter sphaeroides).